Here is a 241-residue protein sequence, read N- to C-terminus: Proteasome subunit beta type-1 (241 aa).

Met-1 is modified (N-acetylmethionine). The propeptide occupies 1–28 (MLSSVAAYSGAGRDLAMEPHSSVGPLQL). A glycan (O-linked (GlcNAc) serine) is linked at Ser-58. 2 positions are modified to phosphoserine: Ser-62 and Ser-68. Tyr-150 carries the post-translational modification Phosphotyrosine. A Phosphoserine modification is found at Ser-162. Position 204 is an N6-acetyllysine (Lys-204). O-linked (GlcNAc) serine glycosylation is present at Ser-209.

The protein belongs to the peptidase T1B family. In terms of assembly, the 26S proteasome consists of a 20S proteasome core and two 19S regulatory subunits. The 20S proteasome core is a barrel-shaped complex made of 28 subunits that are arranged in four stacked rings. The two outer rings are each formed by seven alpha subunits, and the two inner rings are formed by seven beta subunits. The proteolytic activity is exerted by three beta-subunits PSMB5, PSMB6 and PSMB7. Interacts with SERPINB2. Interacts with RFPL4A.

The protein localises to the cytoplasm. Its subcellular location is the nucleus. Functionally, non-catalytic component of the 20S core proteasome complex involved in the proteolytic degradation of most intracellular proteins. This complex plays numerous essential roles within the cell by associating with different regulatory particles. Associated with two 19S regulatory particles, forms the 26S proteasome and thus participates in the ATP-dependent degradation of ubiquitinated proteins. The 26S proteasome plays a key role in the maintenance of protein homeostasis by removing misfolded or damaged proteins that could impair cellular functions, and by removing proteins whose functions are no longer required. Associated with the PA200 or PA28, the 20S proteasome mediates ubiquitin-independent protein degradation. This type of proteolysis is required in several pathways including spermatogenesis (20S-PA200 complex) or generation of a subset of MHC class I-presented antigenic peptides (20S-PA28 complex). This Bos taurus (Bovine) protein is Proteasome subunit beta type-1 (PSMB1).